We begin with the raw amino-acid sequence, 147 residues long: uncharacterized protein (147 aa).

This is an uncharacterized protein from Bacillus subtilis (strain 168).